The chain runs to 203 residues: Elongation factor Ts (203 aa).

Residues 80 to 83 (TDFV) are involved in Mg(2+) ion dislocation from EF-Tu.

Belongs to the EF-Ts family.

The protein localises to the cytoplasm. In terms of biological role, associates with the EF-Tu.GDP complex and induces the exchange of GDP to GTP. It remains bound to the aminoacyl-tRNA.EF-Tu.GTP complex up to the GTP hydrolysis stage on the ribosome. This chain is Elongation factor Ts, found in Moorella thermoacetica (strain ATCC 39073 / JCM 9320).